Reading from the N-terminus, the 652-residue chain is DNA ligase (652 aa).

NAD(+) is bound by residues 29 to 33 (DSEYD), 78 to 79 (SL), and Glu-107. Residue Lys-109 is the N6-AMP-lysine intermediate of the active site. 4 residues coordinate NAD(+): Arg-130, Glu-164, Lys-278, and Lys-302. Zn(2+)-binding residues include Cys-395, Cys-398, Cys-413, and Cys-418. Positions 577 to 652 (AADAVLSGKT…IQDEAWLEQL (76 aa)) constitute a BRCT domain.

The protein belongs to the NAD-dependent DNA ligase family. LigA subfamily. Mg(2+) serves as cofactor. It depends on Mn(2+) as a cofactor.

The enzyme catalyses NAD(+) + (deoxyribonucleotide)n-3'-hydroxyl + 5'-phospho-(deoxyribonucleotide)m = (deoxyribonucleotide)n+m + AMP + beta-nicotinamide D-nucleotide.. Functionally, DNA ligase that catalyzes the formation of phosphodiester linkages between 5'-phosphoryl and 3'-hydroxyl groups in double-stranded DNA using NAD as a coenzyme and as the energy source for the reaction. It is essential for DNA replication and repair of damaged DNA. This chain is DNA ligase, found in Streptococcus gordonii (strain Challis / ATCC 35105 / BCRC 15272 / CH1 / DL1 / V288).